The chain runs to 41 residues: MDIDFRVAIVLAPIAVAAGWAAFNIGAAAIRQVQNFLNREA.

The chain crosses the membrane as a helical span at residues 7–25 (VAIVLAPIAVAAGWAAFNI).

This sequence belongs to the PsbY family. In terms of assembly, PSII is composed of 1 copy each of membrane proteins PsbA, PsbB, PsbC, PsbD, PsbE, PsbF, PsbH, PsbI, PsbJ, PsbK, PsbL, PsbM, PsbT, PsbX, PsbY, PsbZ, Psb30/Ycf12, peripheral proteins PsbO, CyanoQ (PsbQ), PsbU, PsbV and a large number of cofactors. It forms dimeric complexes.

It localises to the cellular thylakoid membrane. Its function is as follows. Loosely associated component of the core of photosystem II (PSII), it is not always seen in crystals. PSII is a light-driven water plastoquinone oxidoreductase, using light energy to abstract electrons from H(2)O, generating a proton gradient subsequently used for ATP formation. This chain is Photosystem II reaction center protein Y, found in Nostoc sp. (strain PCC 7120 / SAG 25.82 / UTEX 2576).